Consider the following 178-residue polypeptide: DNA-directed RNA polymerase subunit beta (178 aa).

It belongs to the RNA polymerase beta chain family. As to quaternary structure, the RNAP catalytic core consists of 2 alpha, 1 beta, 1 beta' and 1 omega subunit. When a sigma factor is associated with the core the holoenzyme is formed, which can initiate transcription.

It catalyses the reaction RNA(n) + a ribonucleoside 5'-triphosphate = RNA(n+1) + diphosphate. DNA-dependent RNA polymerase catalyzes the transcription of DNA into RNA using the four ribonucleoside triphosphates as substrates. This is DNA-directed RNA polymerase subunit beta (rpoB) from Liberibacter asiaticus (Citrus greening disease).